The sequence spans 716 residues: DNA helicase/primase complex-associated protein (716 aa).

It belongs to the herpesviridae HEPA family. In terms of assembly, associates with the primase and the helicase to form the helicase-primase complex. Interacts with the origin-binding protein. Interacts with the polymerase catalytic subunit.

Its subcellular location is the host nucleus. Functionally, component of the helicase/primase complex. Unwinds the DNA at the replication forks and generates single-stranded DNA for both leading and lagging strand synthesis. The primase synthesizes short RNA primers on the lagging strand that the polymerase presumably elongates using dNTPs. The primase-associated factor has no known catalytic activity in the complex and may serve to facilitate the formation of the replisome by directly interacting with the origin-binding protein and the polymerase. The sequence is that of DNA helicase/primase complex-associated protein from Equus caballus (Horse).